Reading from the N-terminus, the 305-residue chain is Glycine--tRNA ligase alpha subunit (305 aa).

It belongs to the class-II aminoacyl-tRNA synthetase family. Tetramer of two alpha and two beta subunits.

It localises to the cytoplasm. It carries out the reaction tRNA(Gly) + glycine + ATP = glycyl-tRNA(Gly) + AMP + diphosphate. The polypeptide is Glycine--tRNA ligase alpha subunit (Streptococcus pneumoniae (strain ATCC 700669 / Spain 23F-1)).